Reading from the N-terminus, the 320-residue chain is NAD-dependent protein deacylase SIR2rp2 (320 aa).

Residues 1–22 (MRPAGTLASFLERCSARKRGRG) constitute a mitochondrion transit peptide. Residues 23–320 (CVVLTGAGCS…MFFRRKTIQL (298 aa)) form the Deacetylase sirtuin-type domain. Residues 28–48 (GAGC…GQYH) and 108–111 (QNVD) each bind NAD(+). The active-site Proton acceptor is His144. Zn(2+) is bound by residues Cys152, Cys155, Cys207, and Cys210. NAD(+)-binding positions include 248 to 250 (GTS), 274 to 276 (NAG), and Gly294.

It belongs to the sirtuin family. Class II subfamily. Zn(2+) is required as a cofactor.

The protein resides in the mitochondrion matrix. It catalyses the reaction N(6)-acetyl-L-lysyl-[protein] + NAD(+) + H2O = 2''-O-acetyl-ADP-D-ribose + nicotinamide + L-lysyl-[protein]. Its function is as follows. NAD-dependent protein deacylase. Catalyzes the NAD-dependent hydrolysis of acyl groups from lysine residues. This chain is NAD-dependent protein deacylase SIR2rp2 (SIR2rp2), found in Leishmania major.